Consider the following 196-residue polypeptide: MPFVVIITGIPGVGKSTITRLALQRTKAKFRLINFGDLMFEEAVKAGLVKHRDEMRKLPLKIQRELQMKAAKKITEMAKEHPILVDTHATIKTPHGYMLGLPYEVVKTLNPNFIVIIEATPSEILGRRLRDLKRDRDVETEEQIQRHQDLNRAAAIAYAMHSNALIKIIENHEDKGLEEAVNELVKILDLAVNEYA.

9–17 (GIPGVGKST) provides a ligand contact to ATP.

This sequence belongs to the archaeal adenylate kinase family.

The protein resides in the cytoplasm. The enzyme catalyses AMP + ATP = 2 ADP. The protein is Adenylate kinase of Pyrococcus furiosus (strain ATCC 43587 / DSM 3638 / JCM 8422 / Vc1).